The chain runs to 151 residues: Macrodomain Ter protein (151 aa).

This sequence belongs to the MatP family. Homodimer.

The protein resides in the cytoplasm. Functionally, required for spatial organization of the terminus region of the chromosome (Ter macrodomain) during the cell cycle. Prevents early segregation of duplicated Ter macrodomains during cell division. Binds specifically to matS, which is a 13 bp signature motif repeated within the Ter macrodomain. The chain is Macrodomain Ter protein from Cronobacter sakazakii (strain ATCC BAA-894) (Enterobacter sakazakii).